A 217-amino-acid polypeptide reads, in one-letter code: UPF0502 protein VF_A0604 (217 aa).

It belongs to the UPF0502 family.

The protein is UPF0502 protein VF_A0604 of Aliivibrio fischeri (strain ATCC 700601 / ES114) (Vibrio fischeri).